Here is a 486-residue protein sequence, read N- to C-terminus: Glycogen synthase (486 aa).

Residue Lys-20 coordinates ADP-alpha-D-glucose.

Belongs to the glycosyltransferase 1 family. Bacterial/plant glycogen synthase subfamily.

It catalyses the reaction [(1-&gt;4)-alpha-D-glucosyl](n) + ADP-alpha-D-glucose = [(1-&gt;4)-alpha-D-glucosyl](n+1) + ADP + H(+). The protein operates within glycan biosynthesis; glycogen biosynthesis. In terms of biological role, synthesizes alpha-1,4-glucan chains using ADP-glucose. This is Glycogen synthase from Aeromonas salmonicida (strain A449).